We begin with the raw amino-acid sequence, 184 residues long: Guanylate kinase (184 aa).

A Guanylate kinase-like domain is found at 4–182; that stretch reads MGLTVLSGPS…AAARLVALMI (179 aa). 11–18 lines the ATP pocket; the sequence is GPSGVGKD.

It belongs to the guanylate kinase family.

It localises to the cytoplasm. The catalysed reaction is GMP + ATP = GDP + ADP. Its function is as follows. Essential for recycling GMP and indirectly, cGMP. In Frankia casuarinae (strain DSM 45818 / CECT 9043 / HFP020203 / CcI3), this protein is Guanylate kinase.